The primary structure comprises 269 residues: Shikimate dehydrogenase (NADP(+)) (269 aa).

Shikimate contacts are provided by residues 15–17 (SLS) and T62. The active-site Proton acceptor is K66. 2 residues coordinate shikimate: N86 and D100. Residues 124–128 (GAGGA), 147–152 (NRTPER), and I211 each bind NADP(+). Y213 is a binding site for shikimate. G234 contributes to the NADP(+) binding site.

The protein belongs to the shikimate dehydrogenase family. Homodimer.

It carries out the reaction shikimate + NADP(+) = 3-dehydroshikimate + NADPH + H(+). It functions in the pathway metabolic intermediate biosynthesis; chorismate biosynthesis; chorismate from D-erythrose 4-phosphate and phosphoenolpyruvate: step 4/7. Functionally, involved in the biosynthesis of the chorismate, which leads to the biosynthesis of aromatic amino acids. Catalyzes the reversible NADPH linked reduction of 3-dehydroshikimate (DHSA) to yield shikimate (SA). The sequence is that of Shikimate dehydrogenase (NADP(+)) from Methanococcoides burtonii (strain DSM 6242 / NBRC 107633 / OCM 468 / ACE-M).